Here is a 364-residue protein sequence, read N- to C-terminus: Histidinol-phosphate aminotransferase (364 aa).

Lysine 220 carries the post-translational modification N6-(pyridoxal phosphate)lysine.

The protein belongs to the class-II pyridoxal-phosphate-dependent aminotransferase family. Histidinol-phosphate aminotransferase subfamily. As to quaternary structure, homodimer. Pyridoxal 5'-phosphate serves as cofactor.

The catalysed reaction is L-histidinol phosphate + 2-oxoglutarate = 3-(imidazol-4-yl)-2-oxopropyl phosphate + L-glutamate. Its pathway is amino-acid biosynthesis; L-histidine biosynthesis; L-histidine from 5-phospho-alpha-D-ribose 1-diphosphate: step 7/9. This Stenotrophomonas maltophilia (strain R551-3) protein is Histidinol-phosphate aminotransferase.